The following is a 276-amino-acid chain: NH(3)-dependent NAD(+) synthetase (276 aa).

43-50 (GISGGVDS) provides a ligand contact to ATP. Residue aspartate 49 participates in Mg(2+) binding. Arginine 146 serves as a coordination point for deamido-NAD(+). Threonine 166 is an ATP binding site. Glutamate 171 is a Mg(2+) binding site. The deamido-NAD(+) site is built by lysine 179 and aspartate 186. Residues lysine 195 and threonine 217 each contribute to the ATP site. 266 to 267 (HK) provides a ligand contact to deamido-NAD(+).

The protein belongs to the NAD synthetase family. In terms of assembly, homodimer.

It carries out the reaction deamido-NAD(+) + NH4(+) + ATP = AMP + diphosphate + NAD(+) + H(+). It functions in the pathway cofactor biosynthesis; NAD(+) biosynthesis; NAD(+) from deamido-NAD(+) (ammonia route): step 1/1. Catalyzes the ATP-dependent amidation of deamido-NAD to form NAD. Uses ammonia as a nitrogen source. The sequence is that of NH(3)-dependent NAD(+) synthetase from Vibrio vulnificus (strain CMCP6).